A 353-amino-acid polypeptide reads, in one-letter code: Photosystem II D2 protein (353 aa).

At Thr-2 the chain carries N-acetylthreonine. Position 2 is a phosphothreonine (Thr-2). The chain crosses the membrane as a helical span at residues 41 to 61; sequence CAYFAVGGWFTGTTFVTSWYT. His-118 provides a ligand contact to chlorophyll a. The chain crosses the membrane as a helical span at residues 125 to 141; that stretch reads GFMLRQFELARSVQLRP. 2 residues coordinate pheophytin a: Gln-130 and Asn-143. Residues 153-166 traverse the membrane as a helical segment; the sequence is VFVSVFLIYPLGQS. His-198 provides a ligand contact to chlorophyll a. Residues 208–228 traverse the membrane as a helical segment; sequence AALLCAIHGATVENTLFEDGD. A plastoquinone-binding residues include His-215 and Phe-262. A Fe cation-binding site is contributed by His-215. His-269 lines the Fe cation pocket. A helical transmembrane segment spans residues 279–295; sequence GLWMSALGVVGLALNLR.

Belongs to the reaction center PufL/M/PsbA/D family. In terms of assembly, PSII is composed of 1 copy each of membrane proteins PsbA, PsbB, PsbC, PsbD, PsbE, PsbF, PsbH, PsbI, PsbJ, PsbK, PsbL, PsbM, PsbT, PsbX, PsbY, PsbZ, Psb30/Ycf12, at least 3 peripheral proteins of the oxygen-evolving complex and a large number of cofactors. It forms dimeric complexes. The D1/D2 heterodimer binds P680, chlorophylls that are the primary electron donor of PSII, and subsequent electron acceptors. It shares a non-heme iron and each subunit binds pheophytin, quinone, additional chlorophylls, carotenoids and lipids. There is also a Cl(-1) ion associated with D1 and D2, which is required for oxygen evolution. The PSII complex binds additional chlorophylls, carotenoids and specific lipids. is required as a cofactor.

The protein resides in the plastid. Its subcellular location is the chloroplast thylakoid membrane. The catalysed reaction is 2 a plastoquinone + 4 hnu + 2 H2O = 2 a plastoquinol + O2. Its function is as follows. Photosystem II (PSII) is a light-driven water:plastoquinone oxidoreductase that uses light energy to abstract electrons from H(2)O, generating O(2) and a proton gradient subsequently used for ATP formation. It consists of a core antenna complex that captures photons, and an electron transfer chain that converts photonic excitation into a charge separation. The D1/D2 (PsbA/PsbD) reaction center heterodimer binds P680, the primary electron donor of PSII as well as several subsequent electron acceptors. D2 is needed for assembly of a stable PSII complex. This Lactuca sativa (Garden lettuce) protein is Photosystem II D2 protein.